The following is a 194-amino-acid chain: 22 kDa relaxation protein (194 aa).

This protein is probably required for relaxation complex formation. This chain is 22 kDa relaxation protein, found in Salmonella typhimurium.